Reading from the N-terminus, the 207-residue chain is Large ribosomal subunit protein uL4 (207 aa).

Positions 45–78 (RQGTHAVKNRSAVSGGGRKPWRQKGTGRARQGSI) are disordered.

Belongs to the universal ribosomal protein uL4 family. Part of the 50S ribosomal subunit.

Functionally, one of the primary rRNA binding proteins, this protein initially binds near the 5'-end of the 23S rRNA. It is important during the early stages of 50S assembly. It makes multiple contacts with different domains of the 23S rRNA in the assembled 50S subunit and ribosome. Its function is as follows. Forms part of the polypeptide exit tunnel. The sequence is that of Large ribosomal subunit protein uL4 from Lacticaseibacillus paracasei (strain ATCC 334 / BCRC 17002 / CCUG 31169 / CIP 107868 / KCTC 3260 / NRRL B-441) (Lactobacillus paracasei).